The following is a 505-amino-acid chain: Maturase K (505 aa).

The protein belongs to the intron maturase 2 family. MatK subfamily.

It localises to the plastid. Its subcellular location is the chloroplast. Usually encoded in the trnK tRNA gene intron. Probably assists in splicing its own and other chloroplast group II introns. The sequence is that of Maturase K from Barclaya longifolia (Orchid lily).